The sequence spans 496 residues: Bifunctional protein HldE (496 aa).

The segment at M1–A331 is ribokinase. Residue N206 to E209 coordinates ATP. D276 is a catalytic residue. Positions F358–L496 are cytidylyltransferase.

The protein in the N-terminal section; belongs to the carbohydrate kinase PfkB family. This sequence in the C-terminal section; belongs to the cytidylyltransferase family. As to quaternary structure, homodimer.

It carries out the reaction D-glycero-beta-D-manno-heptose 7-phosphate + ATP = D-glycero-beta-D-manno-heptose 1,7-bisphosphate + ADP + H(+). The catalysed reaction is D-glycero-beta-D-manno-heptose 1-phosphate + ATP + H(+) = ADP-D-glycero-beta-D-manno-heptose + diphosphate. It participates in nucleotide-sugar biosynthesis; ADP-L-glycero-beta-D-manno-heptose biosynthesis; ADP-L-glycero-beta-D-manno-heptose from D-glycero-beta-D-manno-heptose 7-phosphate: step 1/4. The protein operates within nucleotide-sugar biosynthesis; ADP-L-glycero-beta-D-manno-heptose biosynthesis; ADP-L-glycero-beta-D-manno-heptose from D-glycero-beta-D-manno-heptose 7-phosphate: step 3/4. Catalyzes the phosphorylation of D-glycero-D-manno-heptose 7-phosphate at the C-1 position to selectively form D-glycero-beta-D-manno-heptose-1,7-bisphosphate. In terms of biological role, catalyzes the ADP transfer from ATP to D-glycero-beta-D-manno-heptose 1-phosphate, yielding ADP-D-glycero-beta-D-manno-heptose. The polypeptide is Bifunctional protein HldE (Rhodospirillum rubrum (strain ATCC 11170 / ATH 1.1.1 / DSM 467 / LMG 4362 / NCIMB 8255 / S1)).